A 605-amino-acid polypeptide reads, in one-letter code: Protein DENND6A (605 aa).

A disordered region spans residues 1–20 (MALPGPAVFGPGSRGSLDEA). Positions 60–239 (HCVCVVGFDL…KVRIPTCHDK (180 aa)) constitute a uDENN domain. S124 bears the Phosphoserine mark. The region spanning 265–390 (EVDLFRCFCP…VKVKKLKNLK (126 aa)) is the cDENN domain. A dDENN domain is found at 392 to 525 (LDSKPGVYTS…KTRRKEMTQK (134 aa)). Position 507 is an N6-methyllysine (K507).

The protein belongs to the DENND6 family.

The protein resides in the recycling endosome. The protein localises to the cytoplasm. Guanine nucleotide exchange factor (GEF) for RAB14. Component of an endocytic recycling pathway that is required for the control of ADAM10 transport, shedding of N-cadherin/CDH2 by ADAM9 or ADAM10 and regulation of cell-cell junctions. Required for RAB14 recruitment to recycling endosomes. This chain is Protein DENND6A (Dennd6a), found in Mus musculus (Mouse).